The primary structure comprises 184 residues: NADH-quinone oxidoreductase subunit B (184 aa).

Residues cysteine 63, cysteine 64, cysteine 128, and cysteine 158 each coordinate [4Fe-4S] cluster.

Belongs to the complex I 20 kDa subunit family. NDH-1 is composed of 14 different subunits. Subunits NuoB, C, D, E, F, and G constitute the peripheral sector of the complex. [4Fe-4S] cluster serves as cofactor.

The protein resides in the cell inner membrane. The enzyme catalyses a quinone + NADH + 5 H(+)(in) = a quinol + NAD(+) + 4 H(+)(out). Its function is as follows. NDH-1 shuttles electrons from NADH, via FMN and iron-sulfur (Fe-S) centers, to quinones in the respiratory chain. Couples the redox reaction to proton translocation (for every two electrons transferred, four hydrogen ions are translocated across the cytoplasmic membrane), and thus conserves the redox energy in a proton gradient. In Xylella fastidiosa (strain 9a5c), this protein is NADH-quinone oxidoreductase subunit B.